The sequence spans 370 residues: Mitochondrial carrier protein SCaMC-3L (370 aa).

3 Solcar repeats span residues 90 to 176, 184 to 269, and 280 to 367; these read EALW…CKNY, PPFQ…LQCF, and PSGL…MKKT. 6 helical membrane passes run 96–113, 151–170, 194–207, 245–263, 282–306, and 342–361; these read LLSG…TAPL, GNGI…FSVF, SLAV…INPM, YLPN…LAVY, GLVS…LTLV, and GMTP…YVVY.

Belongs to the mitochondrial carrier (TC 2.A.29) family.

It localises to the mitochondrion inner membrane. It catalyses the reaction Mg(2+)(out) + phosphate(in) + ATP(out) = Mg(2+)(in) + phosphate(out) + ATP(in). It carries out the reaction ADP(out) + phosphate(in) + H(+)(out) = ADP(in) + phosphate(out) + H(+)(in). Functionally, calcium-independent ATP-Mg/Pi exchanger that catalyzes the electroneutral exchange of Mg-ATP or free ADP against an hydrogenphosphate and participates in the net transport of adenine nucleotides across the mitochondria inner membrane. The chain is Mitochondrial carrier protein SCaMC-3L from Homo sapiens (Human).